The following is a 240-amino-acid chain: Aspartate/glutamate leucyltransferase (240 aa).

The protein belongs to the R-transferase family. Bpt subfamily.

Its subcellular location is the cytoplasm. The enzyme catalyses N-terminal L-glutamyl-[protein] + L-leucyl-tRNA(Leu) = N-terminal L-leucyl-L-glutamyl-[protein] + tRNA(Leu) + H(+). It catalyses the reaction N-terminal L-aspartyl-[protein] + L-leucyl-tRNA(Leu) = N-terminal L-leucyl-L-aspartyl-[protein] + tRNA(Leu) + H(+). Functionally, functions in the N-end rule pathway of protein degradation where it conjugates Leu from its aminoacyl-tRNA to the N-termini of proteins containing an N-terminal aspartate or glutamate. This is Aspartate/glutamate leucyltransferase from Bordetella avium (strain 197N).